A 439-amino-acid polypeptide reads, in one-letter code: Lipase 1 (439 aa).

A signal peptide spans 1–24 (MRCSLRMQLLLLLGLCVFISRIQG). The disordered stretch occupies residues 28–60 (GGEEDEEDEEEEEEEEESVEDETPEDRLQRKNI). Positions 29–51 (GEEDEEDEEEEEEEEESVEDETP) are enriched in acidic residues. Asn-124 and Asn-151 each carry an N-linked (GlcNAc...) asparagine glycan. Ser-197 (charge relay system) is an active-site residue. Residues Asn-346 and Asn-379 are each glycosylated (N-linked (GlcNAc...) asparagine). Residue His-393 is the Charge relay system of the active site. Asn-426 carries N-linked (GlcNAc...) asparagine glycosylation.

Belongs to the AB hydrolase superfamily. Lipase family. In terms of tissue distribution, in 14 hours embryos expression is seen in the foregut/midgut boundary.

Its subcellular location is the secreted. Could be a digestive enzyme. The protein is Lipase 1 (Lip1) of Drosophila melanogaster (Fruit fly).